A 75-amino-acid chain; its full sequence is Large ribosomal subunit protein bL31 (75 aa).

The protein belongs to the bacterial ribosomal protein bL31 family. Type A subfamily. Part of the 50S ribosomal subunit.

In terms of biological role, binds the 23S rRNA. The chain is Large ribosomal subunit protein bL31 from Gluconobacter oxydans (strain 621H) (Gluconobacter suboxydans).